We begin with the raw amino-acid sequence, 671 residues long: DNA ligase (671 aa).

NAD(+) is bound by residues 32 to 36 (DAEYD), 81 to 82 (SL), and Glu-113. Lys-115 acts as the N6-AMP-lysine intermediate in catalysis. Arg-136, Glu-173, Lys-290, and Lys-314 together coordinate NAD(+). Residues Cys-408, Cys-411, Cys-426, and Cys-432 each contribute to the Zn(2+) site. The region spanning 593-671 (EIDSPFAGKT…ETEMLRLLGS (79 aa)) is the BRCT domain.

Belongs to the NAD-dependent DNA ligase family. LigA subfamily. Mg(2+) is required as a cofactor. It depends on Mn(2+) as a cofactor.

The enzyme catalyses NAD(+) + (deoxyribonucleotide)n-3'-hydroxyl + 5'-phospho-(deoxyribonucleotide)m = (deoxyribonucleotide)n+m + AMP + beta-nicotinamide D-nucleotide.. Its function is as follows. DNA ligase that catalyzes the formation of phosphodiester linkages between 5'-phosphoryl and 3'-hydroxyl groups in double-stranded DNA using NAD as a coenzyme and as the energy source for the reaction. It is essential for DNA replication and repair of damaged DNA. This is DNA ligase from Escherichia coli O127:H6 (strain E2348/69 / EPEC).